The sequence spans 471 residues: Plant intracellular Ras-group-related LRR protein 2 (471 aa).

Positions 106–133 (VVRLDEVHDSYEKKLKDTEEELSRVYST) form a coiled coil. 10 LRR repeats span residues 159–182 (GGTVERIDLSSQELKLIPEAFWKV), 183–205 (VGLVYLNLSGNDLTFIPDAISKL), 206–229 (KKLEELDVSSNSLESLPDSIGMLL), 231–251 (LRILNVNANNLTALPESIAHC), 253–275 (SLVELDASYNNLTSLPTNIGYGL), 276–298 (QNLERLSIQLNKLRYFPGSISEM), 300–321 (NLKYLDAHMNEIHGIPNSIGRL), 324–346 (LEVLNLSSNFNNLMGVPDTITDL), 347–369 (TNLRELDLSNNQIQAIPDSFYRL), and 371–392 (KLEKLNLDQNPLEIPSQEVATQ). The GVYW; degenerate signature appears at 393 to 405 (GAEVVREFMRKRW).

The protein belongs to the SHOC2 family. Widely expressed but preferentially in roots.

In terms of biological role, leucine-rich repeat protein that likely mediates protein interactions, possibly in the context of signal transduction. The protein is Plant intracellular Ras-group-related LRR protein 2 (PIRL2) of Arabidopsis thaliana (Mouse-ear cress).